The sequence spans 235 residues: Transmembrane emp24 domain-containing protein 9 (235 aa).

The N-terminal stretch at 1 to 37 (MAVELGVLLVRPRPGTGLGRVMRTLLLVLWLATRGSA) is a signal peptide. Residues 38–202 (LYFHIGETEK…RQTSESTNQR (165 aa)) are Lumenal-facing. A GOLD domain is found at 47–145 (KKCFIEEIPD…MLRVHLDIQV (99 aa)). The tract at residues 121-160 (CLHSNSTKFSLFAGGMLRVHLDIQVGEHANDYAEIAAKDK) is required for interaction with STX17. Asparagine 125 carries N-linked (GlcNAc...) asparagine glycosylation. Residues 154-184 (EIAAKDKLSELQLRVRQLVEQVEQIQKEQNY) are a coiled coil. Residue lysine 160 is modified to N6-acetyllysine. The chain crosses the membrane as a helical span at residues 203 to 222 (VLWWSILQTLILVAIGVWQM). Topologically, residues 223-235 (RHLKSFFEAKKLV) are cytoplasmic. The short motif at 228-229 (FF) is the COPII vesicle coat-binding element. Positions 228–235 (FFEAKKLV) match the COPI vesicle coat-binding motif.

Belongs to the EMP24/GP25L family. As to quaternary structure, monomer and homodimer in endoplasmic reticulum. Predominantly monomeric and to lesser extent homodimeric in endoplasmic reticulum-Golgi intermediate compartment and cis-Golgi network. Probably oligomerizes with other members of the EMP24/GP25L family such as TMED2, TMED7 and TMED10. Interacts with TMED5. Interacts (via C-terminus) with COPG1; the interaction involves dimeric TMED9. Interacts with PTPN2 and SPAST. Interacts with STX17; the interaction is direct. N-linked glycosylated containing high mannose.

The protein localises to the endoplasmic reticulum membrane. The protein resides in the golgi apparatus. It localises to the cis-Golgi network membrane. Its subcellular location is the endoplasmic reticulum-Golgi intermediate compartment membrane. It is found in the trans-Golgi network membrane. Its function is as follows. Appears to be involved in vesicular protein trafficking, mainly in the early secretory pathway. In COPI vesicle-mediated retrograde transport involved in the coatomer recruitment to membranes of the early secretory pathway. Increases coatomer-dependent activity of ARFGAP2. Thought to play a crucial role in the specific retention of p24 complexes in cis-Golgi membranes; specifically contributes to the coupled localization of TMED2 and TMED10 in the cis-Golgi network. May be involved in organization of intracellular membranes, such as of the ER-Golgi intermediate compartment and the Golgi apparatus. Involved in ER localization of PTPN2 isoform PTPB. In Homo sapiens (Human), this protein is Transmembrane emp24 domain-containing protein 9 (TMED9).